We begin with the raw amino-acid sequence, 327 residues long: MNWLTNVVRPKIRNILRRETPENLWIKCPDTGQLVFYKDVEQNQFVIPGSNYHMRMGAVARLRAIFDNETWYDVALPEVVADPLKFRDERKYADRIKDARTKTGAHDAVRVGFGKLETSPVVVAVQDFDFMGGSLGMAAGEAIIRGMELAVEKHAPFIMFAASGGARMQEGILSLMQMPRTTVAVQMLREAKLPYIVVLTNPTTGGVTASYAMLGDIHIAEPGALIGFAGARVIEQTIREKLPDGFQRAEYLKEHGMVDMVVHRHDLRPTLARLCRLLTKSPALTVTTAVEAPAEAAAKAEPEATTTEQPVAPAPTEPPAQPAAPQA.

Residues 24–293 (LWIKCPDTGQ…LTVTTAVEAP (270 aa)) form the CoA carboxyltransferase N-terminal domain. The segment covering 293 to 311 (PAEAAAKAEPEATTTEQPV) has biased composition (low complexity). The disordered stretch occupies residues 293-327 (PAEAAAKAEPEATTTEQPVAPAPTEPPAQPAAPQA). Pro residues predominate over residues 312 to 327 (APAPTEPPAQPAAPQA).

It belongs to the AccD/PCCB family. Acetyl-CoA carboxylase is a heterohexamer composed of biotin carboxyl carrier protein (AccB), biotin carboxylase (AccC) and two subunits each of ACCase subunit alpha (AccA) and ACCase subunit beta (AccD).

The protein resides in the cytoplasm. The enzyme catalyses N(6)-carboxybiotinyl-L-lysyl-[protein] + acetyl-CoA = N(6)-biotinyl-L-lysyl-[protein] + malonyl-CoA. It functions in the pathway lipid metabolism; malonyl-CoA biosynthesis; malonyl-CoA from acetyl-CoA: step 1/1. Its function is as follows. Component of the acetyl coenzyme A carboxylase (ACC) complex. Biotin carboxylase (BC) catalyzes the carboxylation of biotin on its carrier protein (BCCP) and then the CO(2) group is transferred by the transcarboxylase to acetyl-CoA to form malonyl-CoA. In Rhodopseudomonas palustris (strain TIE-1), this protein is Acetyl-coenzyme A carboxylase carboxyl transferase subunit beta.